The sequence spans 381 residues: Guanine nucleotide-binding protein G(olf) subunit alpha (381 aa).

The segment at methionine 1–asparagine 25 is disordered. Residue glycine 2 is the site of N-palmitoyl glycine attachment. Cysteine 3 carries S-palmitoyl cysteine lipidation. A compositionally biased stretch (basic and acidic residues) spans threonine 10 to asparagine 25. One can recognise a G-alpha domain in the interval alanine 41–leucine 381. The segment at arginine 44–threonine 57 is G1 motif. 6 residues coordinate GTP: glutamate 52, serine 53, glycine 54, lysine 55, serine 56, and threonine 57. Serine 56 serves as a coordination point for Mg(2+). Threonine 178 is subject to Phosphothreonine. The tract at residues aspartate 183–threonine 191 is G2 motif. Residues leucine 185 and arginine 186 each contribute to the GTP site. Arginine 188 is modified (ADP-ribosylarginine; by cholera toxin). Position 191 (threonine 191) interacts with GTP. Threonine 191 and aspartate 210 together coordinate Mg(2+). A G3 motif region spans residues phenylalanine 206–arginine 215. GTP-binding residues include glycine 213, asparagine 279, lysine 280, aspartate 282, and alanine 353. A G4 motif region spans residues isoleucine 275–aspartate 282. The segment at threonine 351–threonine 356 is G5 motif.

It belongs to the G-alpha family. G(s) subfamily. In terms of assembly, g proteins are composed of 3 units; alpha, beta and gamma. The alpha chain contains the guanine nucleotide binding site. Interacts with GAS2L2. Interacts (GDP-bound form) with RIC8B (via C-terminus); promoting GNAL folding and association with the plasma membrane. Detected in olfactory neuroepithelium, brain, testis, and to a lower extent in retina, lung alveoli, spleen. Trace amounts where seen in kidney, adrenal gland and liver. Found to be expressed in all the insulinomas examined.

It localises to the cell membrane. The enzyme catalyses GTP + H2O = GDP + phosphate + H(+). In terms of biological role, guanine nucleotide-binding protein (G protein) involved as transducer in olfactory signal transduction controlled by G protein-coupled receptors (GPCRs). Contains the guanine nucleotide binding site and alternates between an active, GTP-bound state and an inactive, GDP-bound state. Signaling by an activated GPCR promotes GDP release and GTP binding. The alpha subunit has a low GTPase activity that converts bound GTP to GDP, thereby terminating the signal. Both GDP release and GTP hydrolysis are modulated by numerous regulatory proteins. GNAL/G(olf) alpha specifically mediates olfactory signal transduction within the olfactory neuroepithelium and the basal ganglia following GPCRs activation. Acts by promoting the specific activation of adenylyl cyclase ADCY3, resulting in increased levels of the signaling molecule cAMP. This Homo sapiens (Human) protein is Guanine nucleotide-binding protein G(olf) subunit alpha.